The primary structure comprises 258 residues: MVPWEGYVSDETMGTFAPIALYWVYAGGYQLVLHRRPLERYRLHTRAEEEEKNLVALPAVVRGVLLQQLVQAIVAMILFMVTSDSSAVVVQPPIIIQAFQFLVAMLVMDSWQYFVHRYMHQNKFLYRHIHSQHHRLIVPYAIGALYNHPLEGLLLDTVGGAISFLVSGMTPRTSVFFFCFAVLKTVDDHCGLWLPYNIFQSLFQNNTAYHDVHHQLQGSKYNYSQPFFSIWDRILGTHMPYNLVRRKEGGFEARPLRD.

5 helical membrane passes run 13-33, 63-83, 88-108, 149-169, and 175-195; these read MGTF…QLVL, GVLL…MVTS, VVVQ…MLVM, PLEG…VSGM, and VFFF…LWLP. A Fatty acid hydroxylase domain is found at 101–237; sequence FLVAMLVMDS…FSIWDRILGT (137 aa).

Belongs to the sterol desaturase family. As to quaternary structure, homodimer.

Its subcellular location is the endoplasmic reticulum membrane. It catalyses the reaction a long-chain fatty aldehyde + 2 NADPH + O2 + H(+) = a long-chain alkane + formate + 2 NADP(+) + H2O. Functionally, aldehyde decarbonylase involved in the conversion of aldehydes to alkanes. Core component of a very-long-chain alkane synthesis complex. The protein is Very-long-chain aldehyde decarbonylase GL1-9 of Oryza sativa subsp. indica (Rice).